The following is a 321-amino-acid chain: tRNA uridine(34) hydroxylase (321 aa).

A Rhodanese domain is found at S123–S217. The active-site Cysteine persulfide intermediate is the C177. Basic and acidic residues predominate over residues R294–K308. A disordered region spans residues R294–E321.

It belongs to the TrhO family.

The catalysed reaction is uridine(34) in tRNA + AH2 + O2 = 5-hydroxyuridine(34) in tRNA + A + H2O. Its function is as follows. Catalyzes oxygen-dependent 5-hydroxyuridine (ho5U) modification at position 34 in tRNAs. The polypeptide is tRNA uridine(34) hydroxylase (Teredinibacter turnerae (strain ATCC 39867 / T7901)).